The chain runs to 373 residues: MSSFLPEGGCYELLTVIGKGFEDLMTVNLARYKPTGEYVTVRRINLEACSNEMVTFLQGELHVSKLFSHPNILPYGATFIADNELWVVTSFMAYGSAKDLICTHFMDGMSELAIAYILQGALKALDYIHHMGYVHRSVKASHVLISADGKVYLSGLRSNLSMISHGQRQRVVHDFPKYSIKVLPWLSPEVLQQNLQGYDAKSDIYSVGITACELANGHVPFKDMPATQMLLEKLNGTVPCLLDTSTIPAEELTMSTSRSAANSGLSESLAPSTPRTSNGDSPSHPYHRTFSPHFHHFVEQCLQRNPDMRPSASTLLNHSFFKQIKRRASEALPELLRPVTPITTFEGRQSQDHSGIFGLVTNLEELEVDDWEF.

Positions 11–321 constitute a Protein kinase domain; it reads YELLTVIGKG…ASTLLNHSFF (311 aa). A compositionally biased stretch (polar residues) spans 255 to 281; that stretch reads STSRSAANSGLSESLAPSTPRTSNGDS. The disordered stretch occupies residues 255–288; the sequence is STSRSAANSGLSESLAPSTPRTSNGDSPSHPYHR. Thr361 bears the Phosphothreonine; by LKB1 mark.

Belongs to the protein kinase superfamily. STE Ser/Thr protein kinase family. STE20 subfamily. In terms of assembly, component of a trimeric complex composed of STK11/LKB1, STRAD (STRADA or STRADB) and CAB39/MO25 (CAB39/MO25alpha or CAB39L/MO25beta): the complex tethers STK11/LKB1 in the cytoplasm and stimulates its catalytic activity.

The protein localises to the nucleus. Its subcellular location is the cytoplasm. Functionally, pseudokinase which, in complex with CAB39/MO25 (CAB39/MO25alpha or CAB39L/MO25beta), binds to and activates STK11/LKB1. Adopts a closed conformation typical of active protein kinases and binds STK11/LKB1 as a pseudosubstrate, promoting conformational change of STK11/LKB1 in an active conformation. In Bos taurus (Bovine), this protein is STE20-related kinase adapter protein alpha (STRADA).